We begin with the raw amino-acid sequence, 660 residues long: MSAIESVLHETRQFAPPAALEQAATISGMPAYRALAAEAENDYEGFWARLAREGLAWHKPFTKVLDESNAPFYKWFEDGELNASYNCLDRHVEAGNGERVAVIFEADDGTVTRVTYADLLARVSRFANALKKRGIGKGDRVVIYIPMSIEGIVAMQACARIGATHSVVFGGFSAKSLNERLVDVGATALITADEQARGGKTLPLKSIADEAIALGGCEAVKSVIVYRRTGGKIDWHAERDLWMHELTAGESDQCEPEWVGAEHPLFILYTSGSTGKPKGVQHSTGGYLLWAAQTMKWTFDWKPTDVFWCTADIGWVTGHTYITYGPLACGGTQVVFEGVPTYPDAGRFWKMIGDHKVTVFYTAPTAIRSLIKAAEADDKVHPKSYDLSSLRIIGTVGEPINPEAWMWYHKHVGQERCPIVDTWWQTETGGHMITPLPGATPTVPGSCTLPLPGIMAAVVDETGQDVPNGQGGILVVKRPWPAMIRTIWGDPERFKKSYYPEELGGRLYLAGDGTVRDKDTGYFTIMGRIDDVLNVSGHRLGTMEIESALVSHELVAEAAVVGRPDDTTGEAVVAFVVLKRSRPEGEEAAALAKTLRDWVGKQIGPIAKPKDIRFGDNLPKTRSGKIMRRLLRSLAKGEAITQDTSTLENPAILDQLAEVR.

CoA-binding positions include 197 to 200 (RGGK) and Thr-317. ATP is bound by residues 397–399 (GEP), 421–426 (DTWWQT), Asp-512, and Arg-528. Residue Ser-536 participates in CoA binding. Arg-539 contributes to the ATP binding site. 3 residues coordinate Mg(2+): Val-550, His-552, and Val-555. Lys-625 carries the N6-acetyllysine modification.

It belongs to the ATP-dependent AMP-binding enzyme family. It depends on Mg(2+) as a cofactor. Post-translationally, acetylated. Deacetylation by the SIR2-homolog deacetylase activates the enzyme.

It carries out the reaction acetate + ATP + CoA = acetyl-CoA + AMP + diphosphate. Its function is as follows. Catalyzes the conversion of acetate into acetyl-CoA (AcCoA), an essential intermediate at the junction of anabolic and catabolic pathways. AcsA undergoes a two-step reaction. In the first half reaction, AcsA combines acetate with ATP to form acetyl-adenylate (AcAMP) intermediate. In the second half reaction, it can then transfer the acetyl group from AcAMP to the sulfhydryl group of CoA, forming the product AcCoA. The polypeptide is Acetyl-coenzyme A synthetase (Burkholderia lata (strain ATCC 17760 / DSM 23089 / LMG 22485 / NCIMB 9086 / R18194 / 383)).